A 349-amino-acid chain; its full sequence is Aspartate-semialdehyde dehydrogenase (349 aa).

Residues 12-15 (TGSV) and 39-40 (NS) contribute to the NADP(+) site. Arg-113 is a phosphate binding site. Residue Cys-148 is the Acyl-thioester intermediate of the active site. Gln-175 is a binding site for substrate. 178 to 179 (SG) contacts NADP(+). Glu-201 lines the substrate pocket. Lys-204 provides a ligand contact to phosphate. Substrate is bound at residue Arg-234. The Proton acceptor role is filled by His-241. 326–327 (NT) contributes to the NADP(+) binding site.

This sequence belongs to the aspartate-semialdehyde dehydrogenase family. Homodimer.

The enzyme catalyses L-aspartate 4-semialdehyde + phosphate + NADP(+) = 4-phospho-L-aspartate + NADPH + H(+). It functions in the pathway amino-acid biosynthesis; L-lysine biosynthesis via DAP pathway; (S)-tetrahydrodipicolinate from L-aspartate: step 2/4. The protein operates within amino-acid biosynthesis; L-methionine biosynthesis via de novo pathway; L-homoserine from L-aspartate: step 2/3. Its pathway is amino-acid biosynthesis; L-threonine biosynthesis; L-threonine from L-aspartate: step 2/5. Functionally, catalyzes the NADPH-dependent formation of L-aspartate-semialdehyde (L-ASA) by the reductive dephosphorylation of L-aspartyl-4-phosphate. This Leptospira interrogans serogroup Icterohaemorrhagiae serovar copenhageni (strain Fiocruz L1-130) protein is Aspartate-semialdehyde dehydrogenase.